The primary structure comprises 326 residues: Glyceraldehyde-3-phosphate dehydrogenase, cytosolic (326 aa).

NAD(+)-binding positions include 2–3, D24, and R71; that span reads RI. D-glyceraldehyde 3-phosphate contacts are provided by residues 142–144, T173, 202–203, and R225; these read SCT and TG. C143 (nucleophile) is an active-site residue. N307 is an NAD(+) binding site.

Belongs to the glyceraldehyde-3-phosphate dehydrogenase family.

It is found in the cytoplasm. The enzyme catalyses D-glyceraldehyde 3-phosphate + phosphate + NAD(+) = (2R)-3-phospho-glyceroyl phosphate + NADH + H(+). It participates in carbohydrate degradation; glycolysis; pyruvate from D-glyceraldehyde 3-phosphate: step 1/5. Its function is as follows. Key enzyme in glycolysis that catalyzes the first step of the pathway by converting D-glyceraldehyde 3-phosphate (G3P) into 3-phospho-D-glyceroyl phosphate. Essential for the maintenance of cellular ATP levels and carbohydrate metabolism. This chain is Glyceraldehyde-3-phosphate dehydrogenase, cytosolic (GAPC), found in Nicotiana tabacum (Common tobacco).